We begin with the raw amino-acid sequence, 66 residues long: uncharacterized protein (66 aa).

This is an uncharacterized protein from Archaeoglobus fulgidus (strain ATCC 49558 / DSM 4304 / JCM 9628 / NBRC 100126 / VC-16).